The sequence spans 329 residues: Serpentine receptor class alpha-4 (329 aa).

Helical transmembrane passes span Ile25–Val45, Leu103–Leu123, Gly144–Trp164, Tyr188–Trp208, Ile238–Ile258, and Leu273–Phe293.

This sequence belongs to the nematode receptor-like protein sra family.

Its subcellular location is the membrane. This chain is Serpentine receptor class alpha-4 (sra-4), found in Caenorhabditis elegans.